The primary structure comprises 415 residues: MELRVGNRYRLGRKIGSGSFGDIYLGTDIAAGEEVAIKLECVKTKPPQLHIESKIYKMMQGGVGIPTIRWCGAEGDYNVMVMELLGPSLEDLFNFCSRKFSLKTILLLADQMISRIEYIHSKNFIHRDVKPDNFLMGLGKKGNLVYIIDFGLAKKYRDARTHQHIPYRENKNLTGTARYASINTHLGIEQSRRDDLESLGYVLMYFNLGSLPWQGLKAATKRQKYERISEKKMSTPIEVLCKGYPSEFATYLNFCRSLRFDDKPDYSYLRQLFRNLFHRQGFSYDYVFDWNMLKFGASRAADDAERERRDREERLRHSRNPATRGLPSTASGRLRGTQEVAPPTPLTPTSHTANTSPRPVSGMERERKVSMRLHRGAPVNISSSDLTGRQDTSRMSTSQIPGRVASSGLQSVVHR.

The 269-residue stretch at 9–277 folds into the Protein kinase domain; the sequence is YRLGRKIGSG…YLRQLFRNLF (269 aa). Residues 15-23 and lysine 38 contribute to the ATP site; that span reads IGSGSFGDI. Catalysis depends on aspartate 128, which acts as the Proton acceptor. Residues 278–364 are centrosomal localization signal (CLS); sequence HRQGFSYDYV…TSPRPVSGME (87 aa). A compositionally biased stretch (basic and acidic residues) spans 301 to 315; that stretch reads ADDAERERRDREERL. Residues 301-415 form a disordered region; it reads ADDAERERRD…SSGLQSVVHR (115 aa). Residues 317–342 form an autoinhibitory region; it reads HSRNPATRGLPSTASGRLRGTQEVAP. Residues serine 328 and serine 331 each carry the phosphoserine modification. The span at 347-358 shows a compositional bias: polar residues; that stretch reads TPTSHTANTSPR. Serine 370 is subject to Phosphoserine. Residue arginine 375 is modified to Omega-N-methylarginine. Residues 380–400 are compositionally biased toward polar residues; it reads NISSSDLTGRQDTSRMSTSQI. Serine 382, serine 383, serine 384, serine 407, and serine 411 each carry phosphoserine.

Belongs to the protein kinase superfamily. CK1 Ser/Thr protein kinase family. Casein kinase I subfamily. Monomer. Component of the circadian core oscillator, which includes the CRY proteins, CLOCK, or NPAS2, ARTNL/BMAL1 or ARTNL2/BMAL2, CSNK1D and/or CSNK1E, TIMELESS and the PER proteins. Interacts with DNMT1 and MAP1A. Interacts directly with PER1 and PER2 which may lead to their degradation. Interacts with MAPT/TAU, SNAPIN, DBNDD2, AIB1/NCOA3 and ESR1. Interacts with AKAP9/AKAP450; this interaction promotes centrosomal subcellular location. Binds to tubulins in mitotic cells upon DNA damage. Interacts with GJA1. Interacts with DDX3X; this interaction enhances CSNK1D kinase activity in vitro, but it is unclear whether this interaction is physiologically relevant. Interacts with FAM83A, FAM83B, FAM83E and FAM83H (via DUF1669). Autophosphorylated on serine and threonine residues; this autophosphorylation represses activity. Reactivated by phosphatase-mediated dephosphorylation. May be dephosphorylated by PP1.

The protein resides in the cytoplasm. Its subcellular location is the nucleus. It is found in the cytoskeleton. It localises to the microtubule organizing center. The protein localises to the centrosome. The protein resides in the perinuclear region. Its subcellular location is the cell membrane. It is found in the spindle. It localises to the golgi apparatus. It carries out the reaction L-seryl-[protein] + ATP = O-phospho-L-seryl-[protein] + ADP + H(+). The enzyme catalyses L-threonyl-[protein] + ATP = O-phospho-L-threonyl-[protein] + ADP + H(+). It catalyses the reaction L-seryl-[tau protein] + ATP = O-phospho-L-seryl-[tau protein] + ADP + H(+). The catalysed reaction is L-threonyl-[tau protein] + ATP = O-phospho-L-threonyl-[tau protein] + ADP + H(+). Its activity is regulated as follows. Exhibits substrate-dependent heparin activation. Drug-mediated inhibition leads to a delay of the oscillations with the magnitude of this effect dependent upon the timing of drug administration. Inhibited by phosphorylation. Functionally, essential serine/threonine-protein kinase that regulates diverse cellular growth and survival processes including Wnt signaling, DNA repair and circadian rhythms. It can phosphorylate a large number of proteins. Casein kinases are operationally defined by their preferential utilization of acidic proteins such as caseins as substrates. Phosphorylates connexin-43/GJA1, MAP1A, SNAPIN, MAPT/TAU, TOP2A, DCK, HIF1A, EIF6, p53/TP53, DVL2, DVL3, ESR1, AIB1/NCOA3, DNMT1, PKD2, YAP1, PER1 and PER2. Central component of the circadian clock. In balance with PP1, determines the circadian period length through the regulation of the speed and rhythmicity of PER1 and PER2 phosphorylation. Controls PER1 and PER2 nuclear transport and degradation. YAP1 phosphorylation promotes its SCF(beta-TRCP) E3 ubiquitin ligase-mediated ubiquitination and subsequent degradation. DNMT1 phosphorylation reduces its DNA-binding activity. Phosphorylation of ESR1 and AIB1/NCOA3 stimulates their activity and coactivation. Phosphorylation of DVL2 and DVL3 regulates WNT3A signaling pathway that controls neurite outgrowth. Phosphorylates NEDD9/HEF1. EIF6 phosphorylation promotes its nuclear export. Triggers down-regulation of dopamine receptors in the forebrain. Activates DCK in vitro by phosphorylation. TOP2A phosphorylation favors DNA cleavable complex formation. May regulate the formation of the mitotic spindle apparatus in extravillous trophoblast. Modulates connexin-43/GJA1 gap junction assembly by phosphorylation. Probably involved in lymphocyte physiology. Regulates fast synaptic transmission mediated by glutamate. This is Casein kinase I isoform delta (CSNK1D) from Pongo abelii (Sumatran orangutan).